The primary structure comprises 317 residues: tRNA-cytidine(32) 2-sulfurtransferase (317 aa).

The PP-loop motif signature appears at 63–68 (SGGKDS). [4Fe-4S] cluster contacts are provided by C138, C141, and C229.

The protein belongs to the TtcA family. As to quaternary structure, homodimer. It depends on Mg(2+) as a cofactor. [4Fe-4S] cluster is required as a cofactor.

It localises to the cytoplasm. It catalyses the reaction cytidine(32) in tRNA + S-sulfanyl-L-cysteinyl-[cysteine desulfurase] + AH2 + ATP = 2-thiocytidine(32) in tRNA + L-cysteinyl-[cysteine desulfurase] + A + AMP + diphosphate + H(+). It participates in tRNA modification. In terms of biological role, catalyzes the ATP-dependent 2-thiolation of cytidine in position 32 of tRNA, to form 2-thiocytidine (s(2)C32). The sulfur atoms are provided by the cysteine/cysteine desulfurase (IscS) system. The polypeptide is tRNA-cytidine(32) 2-sulfurtransferase (Janthinobacterium sp. (strain Marseille) (Minibacterium massiliensis)).